The chain runs to 312 residues: Ribosomal protein L11 methyltransferase (312 aa).

Residues Thr-160, Gly-181, Asp-203, and Asn-246 each coordinate S-adenosyl-L-methionine.

The protein belongs to the methyltransferase superfamily. PrmA family.

Its subcellular location is the cytoplasm. It catalyses the reaction L-lysyl-[protein] + 3 S-adenosyl-L-methionine = N(6),N(6),N(6)-trimethyl-L-lysyl-[protein] + 3 S-adenosyl-L-homocysteine + 3 H(+). Its function is as follows. Methylates ribosomal protein L11. This Staphylococcus aureus (strain COL) protein is Ribosomal protein L11 methyltransferase.